Reading from the N-terminus, the 309-residue chain is Eugenol synthase 2 (309 aa).

NADP(+)-binding positions include 13–16, 35–45, R36, 86–88, 111–113, K134, and 154–156; these read TGYI, VRETTVSDPVK, FMQ, SEF, and NCF. K134 (proton donor/acceptor) is an active-site residue.

Belongs to the NmrA-type oxidoreductase family. In terms of tissue distribution, mostly expressed in petals, and, to a lower extent, in sepals, stamens and pistils.

The catalysed reaction is eugenol + a carboxylate + NADP(+) = a coniferyl ester + NADPH. It catalyses the reaction eugenol + acetate + NADP(+) = (E)-coniferyl acetate + NADPH. It functions in the pathway aromatic compound metabolism; phenylpropanoid biosynthesis. Functionally, catalyzes the synthesis of the phenylpropene eugenol from coniferyl acetate. Phenylpropenes are produced by plants as defense compounds with antimicrobial and antianimal properties, or as floral attractants of pollinators. This is Eugenol synthase 2 from Clarkia breweri (Fairy fans).